We begin with the raw amino-acid sequence, 518 residues long: Tropomyosin-1, isoforms 33/34 (518 aa).

Residues 14–267 (DKDGALERAL…DDLIVEKERY (254 aa)) are a coiled coil. Disordered regions lie at residues 101–125 (RSEE…ESER) and 288–518 (FWNP…APPA). The segment covering 293-305 (NPKPPTPKLPTPT) has biased composition (pro residues). A compositionally biased stretch (low complexity) spans 318–348 (AAEAAAAAEAEAAEAAAAAGEAGPDGAPAAP). Composition is skewed to pro residues over residues 357-374 (EPTP…PPPF) and 394-405 (EPPPPGSEPEPV). The segment covering 406–518 (PAAEGEAAPA…AAAEGEAPPA (113 aa)) has biased composition (low complexity).

This sequence belongs to the tropomyosin family. Homodimer. As to expression, both isoforms are only expressed in indirect flight muscles.

The protein resides in the cytoplasm. Its subcellular location is the cytoskeleton. Its function is as follows. Tropomyosin, in association with the troponin complex, plays a central role in the calcium dependent regulation of muscle contraction. The chain is Tropomyosin-1, isoforms 33/34 (Tm1) from Drosophila melanogaster (Fruit fly).